Here is a 246-residue protein sequence, read N- to C-terminus: tRNA (guanine-N(1)-)-methyltransferase (246 aa).

S-adenosyl-L-methionine is bound by residues G114 and I134 to L139.

The protein belongs to the RNA methyltransferase TrmD family. As to quaternary structure, homodimer.

It is found in the cytoplasm. It carries out the reaction guanosine(37) in tRNA + S-adenosyl-L-methionine = N(1)-methylguanosine(37) in tRNA + S-adenosyl-L-homocysteine + H(+). Its function is as follows. Specifically methylates guanosine-37 in various tRNAs. The chain is tRNA (guanine-N(1)-)-methyltransferase from Coxiella burnetii (strain CbuG_Q212) (Coxiella burnetii (strain Q212)).